Consider the following 20-residue polypeptide: Venom prothrombin activator notanarin-D (20 aa).

Residues 1–10 (SNSLFEEVRP) enclose the Gla domain. Residues E6 and E7 each carry the 4-carboxyglutamate modification. Residues 11 to 20 (IVNGMDCKLG) enclose the Peptidase S1 domain.

This sequence belongs to the peptidase S1 family. Snake venom subfamily. As to quaternary structure, heterodimer of a light chain and a heavy chain; disulfide-linked. Gamma-carboxyglutamate residues are formed by vitamin K dependent carboxylation. These residues are essential for the binding of calcium. As to expression, expressed by the venom gland.

Its subcellular location is the secreted. It carries out the reaction Selective cleavage of Arg-|-Thr and then Arg-|-Ile bonds in prothrombin to form thrombin.. Functionally, snake prothrombin activator that attacks the hemostatic system of prey. This protein is functionally similar to blood coagulation factor Xa. In Notechis scutatus niger (Peninsula tiger snake), this protein is Venom prothrombin activator notanarin-D.